Here is a 747-residue protein sequence, read N- to C-terminus: Fatty acid oxidation complex subunit alpha (747 aa).

Residues 1 to 197 are enoyl-CoA hydratase; the sequence is MGASATNSVT…KMGLVDDVVP (197 aa). Residues 313 to 747 form a 3-hydroxyacyl-CoA dehydrogenase region; that stretch reads RAIHRVGVLG…NIDEVTDVAS (435 aa). Positions 590-614 are disordered; it reads YLYSNPTKNSSPTKNGNSPAKRNSF. A compositionally biased stretch (polar residues) spans 593–610; the sequence is SNPTKNSSPTKNGNSPAK.

This sequence in the N-terminal section; belongs to the enoyl-CoA hydratase/isomerase family. The protein in the central section; belongs to the 3-hydroxyacyl-CoA dehydrogenase family. As to quaternary structure, heterotetramer of two alpha chains (FadJ) and two beta chains (FadI).

The protein resides in the cytoplasm. It carries out the reaction a (3S)-3-hydroxyacyl-CoA = a (2E)-enoyl-CoA + H2O. The enzyme catalyses a 4-saturated-(3S)-3-hydroxyacyl-CoA = a (3E)-enoyl-CoA + H2O. It catalyses the reaction a (3S)-3-hydroxyacyl-CoA + NAD(+) = a 3-oxoacyl-CoA + NADH + H(+). The catalysed reaction is (3S)-3-hydroxybutanoyl-CoA = (3R)-3-hydroxybutanoyl-CoA. It functions in the pathway lipid metabolism; fatty acid beta-oxidation. Functionally, catalyzes the formation of a hydroxyacyl-CoA by addition of water on enoyl-CoA. Also exhibits 3-hydroxyacyl-CoA epimerase and 3-hydroxyacyl-CoA dehydrogenase activities. In Yersinia pseudotuberculosis serotype O:1b (strain IP 31758), this protein is Fatty acid oxidation complex subunit alpha.